A 408-amino-acid polypeptide reads, in one-letter code: 5-hydroxytryptamine receptor 1A (408 aa).

Over 1–32 the chain is Extracellular; it reads MDASNNTTSWNILQRGRMGPSWRRCPVSYQII. Residues asparagine 5 and asparagine 6 are each glycosylated (N-linked (GlcNAc...) asparagine). A helical transmembrane segment spans residues 33-53; it reads ASLFLGRSFSAGIFGNACVIA. Over 54–67 the chain is Cytoplasmic; it reads AIALERSLQNVANY. A helical transmembrane segment spans residues 68 to 92; that stretch reads LIGSLAVTDLMVSVLVLPMAAQNQV. The Extracellular segment spans residues 93-101; sequence LNKWTLGQV. A helical transmembrane segment spans residues 102 to 126; the sequence is TCDIFISLDVLCCTSSILHLCAIAL. Cysteine 103 and cysteine 181 are joined by a disulfide. 2 residues coordinate serotonin: aspartate 110 and cysteine 114. A DRY motif; important for ligand-induced conformation changes motif is present at residues 127 to 129; sequence DRY. At 127 to 146 the chain is on the cytoplasmic side; the sequence is DRYWAITDPIDYVNKRTPRR. The helical transmembrane segment at 147-168 threads the bilayer; it reads AAVLISITWIVGFSISIPPMLG. Topologically, residues 169 to 187 are extracellular; it reads WRTPEDRSDPNACRISEDP. Residues 188-210 traverse the membrane as a helical segment; sequence GYTIYSTFGAFYIPLILMLVLYG. The Cytoplasmic segment spans residues 211–333; that stretch reads KIFKAARFRI…LARERKTVKT (123 aa). The interval 235 to 255 is disordered; it reads TCLSVSQQSPKEKQRGAQQEL. Residues lysine 332, threonine 333, and glycine 339 each contribute to the 1D-myo-inositol 4-phosphate site. The helical transmembrane segment at 334–357 threads the bilayer; it reads LGIIMGTFILCWLPFFIVALVLPF. The Extracellular portion of the chain corresponds to 358 to 364; the sequence is CETCHMP. The chain crosses the membrane as a helical span at residues 365–389; it reads HLLFDIITWLGYSNSLLNPIIYAYF. An NPxxY motif; important for ligand-induced conformation changes and signaling motif is present at residues 382–386; it reads NPIIY. The 1D-myo-inositol 4-phosphate site is built by phenylalanine 389, asparagine 390, and lysine 391. Topologically, residues 390 to 408 are cytoplasmic; that stretch reads NKDFQSAFKKIIKCKFCRQ.

It belongs to the G-protein coupled receptor 1 family. 5-hydroxytryptamine receptor subfamily. HTR1A sub-subfamily. In terms of tissue distribution, first expressed in the rostral part of the brain stem at stage 22. At later stages of development, expression is localized to serotonergic neurons. The expression pattern changes in the tadpole of stage 41 where, in addition to serotonergic neurons, expression is also localized to the inner nuclear layer (INL) of the developing retina. This expression pattern continues through to the start of metamorphosis (stage 46). In adults, expressed in the brain, in particular the telencephalon, diencephalon and mesencephalon. In the telencephalic region, expression is localized to the lateral, dorsal and medial pallium, and in the striatum, septum and amygdala. In the mesencephalic region, expression is strongest in the optic tectum and torus semicircularis with moderate levels of expression in tegmental nuclei. In diencephalon, localized to the dorsal and ventral thalamus and the preoptic area of the hypothalamus.

Its subcellular location is the cell membrane. With respect to regulation, G-protein coupled receptor activity is regulated by lipids: phosphatidylinositol 4-phosphate increases HTR1A-mediated activity. In terms of biological role, G-protein coupled receptor for 5-hydroxytryptamine (serotonin). Also functions as a receptor for various drugs and psychoactive substances. Ligand binding causes a conformation change that triggers signaling via guanine nucleotide-binding proteins (G proteins) and modulates the activity of downstream effectors, such as adenylate cyclase. HTR1A is coupled to G(i)/G(o) G alpha proteins and mediates inhibitory neurotransmission: signaling inhibits adenylate cyclase activity and activates a phosphatidylinositol-calcium second messenger system that regulates the release of Ca(2+) ions from intracellular stores. Beta-arrestin family members regulate signaling by mediating both receptor desensitization and resensitization processes. Activation of the receptor may play a role in the exit from G0 phase and in promoting DNA synthesis. This chain is 5-hydroxytryptamine receptor 1A, found in Xenopus laevis (African clawed frog).